The following is a 196-amino-acid chain: MSDNIPAQREFDHERAEAAVRELLIAVGEDPDREGLRETPARVARAYAEVFAGLHQDPTEVLHKTFAEEHQELVLVRDIPIYSTCEHHLVPFYGTAHIGYIPGTDGHVTGLSKLARLADMYAKRPQVQERLTSQIADALVEVLHAQSVIVVIECEHLCMAMRGIRKPGATTTTSAVRGGFKKNAASRAEVMSLIRS.

Residues C85, H88, and C158 each coordinate Zn(2+).

The protein belongs to the GTP cyclohydrolase I family. In terms of assembly, homomer.

The enzyme catalyses GTP + H2O = 7,8-dihydroneopterin 3'-triphosphate + formate + H(+). It functions in the pathway cofactor biosynthesis; 7,8-dihydroneopterin triphosphate biosynthesis; 7,8-dihydroneopterin triphosphate from GTP: step 1/1. This is GTP cyclohydrolase 1 from Corynebacterium aurimucosum (strain ATCC 700975 / DSM 44827 / CIP 107346 / CN-1) (Corynebacterium nigricans).